The sequence spans 177 residues: Large ribosomal subunit protein uL6 (177 aa).

It belongs to the universal ribosomal protein uL6 family. As to quaternary structure, part of the 50S ribosomal subunit.

Its function is as follows. This protein binds to the 23S rRNA, and is important in its secondary structure. It is located near the subunit interface in the base of the L7/L12 stalk, and near the tRNA binding site of the peptidyltransferase center. This chain is Large ribosomal subunit protein uL6, found in Neisseria gonorrhoeae (strain ATCC 700825 / FA 1090).